A 358-amino-acid chain; its full sequence is Probable aminomethyltransferase (358 aa).

Belongs to the GcvT family. As to quaternary structure, the glycine cleavage system is composed of four proteins: P, T, L and H.

It carries out the reaction N(6)-[(R)-S(8)-aminomethyldihydrolipoyl]-L-lysyl-[protein] + (6S)-5,6,7,8-tetrahydrofolate = N(6)-[(R)-dihydrolipoyl]-L-lysyl-[protein] + (6R)-5,10-methylene-5,6,7,8-tetrahydrofolate + NH4(+). Functionally, the glycine cleavage system catalyzes the degradation of glycine. This Natronomonas pharaonis (strain ATCC 35678 / DSM 2160 / CIP 103997 / JCM 8858 / NBRC 14720 / NCIMB 2260 / Gabara) (Halobacterium pharaonis) protein is Probable aminomethyltransferase.